Here is a 1230-residue protein sequence, read N- to C-terminus: ABC transporter B family member 5 (1230 aa).

Transmembrane regions (helical) follow at residues 27 to 47 (VLLMIVGSIGAIANGVCSPLM), 78 to 98 (LVYLGLGALGAAFLQVACWMI), 154 to 174 (FIQLISTFVGGFVIAFLRGWL), 177 to 197 (LVMLTSIPLLAMSGAAIAIIV), 253 to 273 (GFVTGLGLGVMFLVFFSTYAL), and 286 to 306 (GYTGGAVINVMVTVVSSSIAL). The ABC transmembrane type-1 1 domain maps to 30-318 (MIVGSIGAIA…ASPCLTAFTA (289 aa)). Residues 353–589 (IELRDVCFSY…HEGAYSQLLR (237 aa)) enclose the ABC transporter 1 domain. ATP is bound at residue 388–395 (GESGSGKS). N-linked (GlcNAc...) asparagine glycans are attached at residues asparagine 540, asparagine 615, and asparagine 616. The tract at residues 602 to 621 (ISDGSISSGSSRGNNSTRQD) is disordered. A compositionally biased stretch (low complexity) spans 603 to 617 (SDGSISSGSSRGNNS). 2 helical membrane passes run 662 to 682 (ILILGTLVGAVNGTIFPIFGI) and 707 to 727 (MIFVLLGVAAVIVYPTTNYLF). One can recognise an ABC transmembrane type-1 2 domain in the interval 663–950 (LILGTLVGAV…ASSFAPDSSK (288 aa)). Asparagine 759 carries N-linked (GlcNAc...) asparagine glycosylation. The next 3 helical transmembrane spans lie at 798–818 (IIAFTASWEVAIIILVIIPFI), 889–909 (GVGFGISFFVLYSVYASCFYV), and 924–944 (VFQVFLALTLTAVGISQASSF). Positions 985-1223 (IELCHISFTY…EGGVYASLVQ (239 aa)) constitute an ABC transporter 2 domain. 1020–1027 (GESGSGKS) contacts ATP. N-linked (GlcNAc...) asparagine glycans are attached at residues asparagine 1074, asparagine 1174, and asparagine 1227.

This sequence belongs to the ABC transporter superfamily. ABCB family. Multidrug resistance exporter (TC 3.A.1.201) subfamily.

The protein localises to the membrane. The chain is ABC transporter B family member 5 (ABCB5) from Arabidopsis thaliana (Mouse-ear cress).